An 88-amino-acid polypeptide reads, in one-letter code: Putative membrane protein insertion efficiency factor (88 aa).

It belongs to the UPF0161 family.

It localises to the cell membrane. In terms of biological role, could be involved in insertion of integral membrane proteins into the membrane. The polypeptide is Putative membrane protein insertion efficiency factor (Exiguobacterium sibiricum (strain DSM 17290 / CCUG 55495 / CIP 109462 / JCM 13490 / 255-15)).